The sequence spans 621 residues: Glutamyl-tRNA(Gln) amidotransferase subunit B, mitochondrial (621 aa).

The transit peptide at 1-41 directs the protein to the mitochondrion; the sequence is MARLPTTELRKYLLTGQFTRRGCLHLRPSPLAPPIPPLRTL. 2 disordered regions span residues 26 to 86 and 106 to 136; these read LRPS…DNQT and SKLF…APFD. 2 stretches are compositionally biased toward low complexity: residues 38 to 57 and 110 to 120; these read LRTL…QIIP and SPASTPSSSSD.

This sequence belongs to the GatB/GatE family. GatB subfamily. In terms of assembly, subunit of the heterotrimeric GatCAB amidotransferase (AdT) complex, composed of A, B and C subunits.

It localises to the mitochondrion. It catalyses the reaction L-glutamyl-tRNA(Gln) + L-glutamine + ATP + H2O = L-glutaminyl-tRNA(Gln) + L-glutamate + ADP + phosphate + H(+). Allows the formation of correctly charged Gln-tRNA(Gln) through the transamidation of misacylated Glu-tRNA(Gln) in the mitochondria. The reaction takes place in the presence of glutamine and ATP through an activated gamma-phospho-Glu-tRNA(Gln). The protein is Glutamyl-tRNA(Gln) amidotransferase subunit B, mitochondrial of Podospora anserina (strain S / ATCC MYA-4624 / DSM 980 / FGSC 10383) (Pleurage anserina).